A 318-amino-acid chain; its full sequence is Ubiquitin-like domain-containing CTD phosphatase 1 (318 aa).

N-acetylalanine is present on alanine 2. A Ubiquitin-like domain is found at 3 to 81 (LPIIVKWGGQ…IMMMGTREES (79 aa)). Position 117 is an N6-acetyllysine (lysine 117). Residues 133 to 294 (PREGKKLLVL…LKLTQYLKEI (162 aa)) form the FCP1 homology domain. Mg(2+) contacts are provided by aspartate 143, aspartate 145, and aspartate 253.

The cofactor is Mg(2+).

The protein resides in the nucleus. It catalyses the reaction O-phospho-L-seryl-[protein] + H2O = L-seryl-[protein] + phosphate. The catalysed reaction is O-phospho-L-threonyl-[protein] + H2O = L-threonyl-[protein] + phosphate. In terms of biological role, dephosphorylates 26S nuclear proteasomes, thereby decreasing their proteolytic activity. Recruited to the 19S regulatory particle of the 26S proteasome through its interaction with 19S component PSMD2/RPN1. Once recruited, dephosphorylates 19S component PSMC2/RPT1 which impairs PSMC2 ATPase activity and disrupts 26S proteasome assembly. Has also been reported to stimulate the proteolytic activity of the 26S proteasome. The protein is Ubiquitin-like domain-containing CTD phosphatase 1 (UBLCP1) of Bos taurus (Bovine).